A 127-amino-acid polypeptide reads, in one-letter code: uncharacterized protein (127 aa).

The span at 1 to 17 (MQGSVQIQKGNISSSYT) shows a compositional bias: polar residues. The segment at 1-36 (MQGSVQIQKGNISSSYTPEKHPSHPTSANGSMSPKR) is disordered.

This is an uncharacterized protein from Treponema pallidum (strain Nichols).